Reading from the N-terminus, the 418-residue chain is UDP-N-acetylglucosamine 1-carboxyvinyltransferase (418 aa).

Position 22–23 (22–23 (KN)) interacts with phosphoenolpyruvate. Residue Arg92 coordinates UDP-N-acetyl-alpha-D-glucosamine. Catalysis depends on Cys116, which acts as the Proton donor. Cys116 bears the 2-(S-cysteinyl)pyruvic acid O-phosphothioketal mark. UDP-N-acetyl-alpha-D-glucosamine is bound by residues Asp305 and Ile327.

The protein belongs to the EPSP synthase family. MurA subfamily.

The protein resides in the cytoplasm. It catalyses the reaction phosphoenolpyruvate + UDP-N-acetyl-alpha-D-glucosamine = UDP-N-acetyl-3-O-(1-carboxyvinyl)-alpha-D-glucosamine + phosphate. It functions in the pathway cell wall biogenesis; peptidoglycan biosynthesis. Its function is as follows. Cell wall formation. Adds enolpyruvyl to UDP-N-acetylglucosamine. This Gluconobacter oxydans (strain 621H) (Gluconobacter suboxydans) protein is UDP-N-acetylglucosamine 1-carboxyvinyltransferase.